The primary structure comprises 493 residues: Glutamyl-tRNA(Gln) amidotransferase subunit A (493 aa).

Catalysis depends on charge relay system residues K78 and S158. The active-site Acyl-ester intermediate is the S182.

This sequence belongs to the amidase family. GatA subfamily. In terms of assembly, heterotrimer of A, B and C subunits.

It catalyses the reaction L-glutamyl-tRNA(Gln) + L-glutamine + ATP + H2O = L-glutaminyl-tRNA(Gln) + L-glutamate + ADP + phosphate + H(+). In terms of biological role, allows the formation of correctly charged Gln-tRNA(Gln) through the transamidation of misacylated Glu-tRNA(Gln) in organisms which lack glutaminyl-tRNA synthetase. The reaction takes place in the presence of glutamine and ATP through an activated gamma-phospho-Glu-tRNA(Gln). The protein is Glutamyl-tRNA(Gln) amidotransferase subunit A of Rickettsia typhi (strain ATCC VR-144 / Wilmington).